A 102-amino-acid chain; its full sequence is Major basic nuclear protein 2 (102 aa).

Residues 1–11 (MKAMKATKKAM) are compositionally biased toward basic residues. The disordered stretch occupies residues 1–43 (MKAMKATKKAMTKTGLAEALAPKPSSARRIAPPSSRAWPPSAQ). Over residues 21–42 (APKPSSARRIAPPSSRAWPPSA) the composition is skewed to low complexity.

It is found in the nucleus. The polypeptide is Major basic nuclear protein 2 (HCc2) (Crypthecodinium cohnii (Dinoflagellate)).